A 165-amino-acid polypeptide reads, in one-letter code: Sporulation-specific cell division protein SsgB (165 aa).

Residues 1–21 (MLVGNSWTRSLEPVSGHEHTE) are disordered.

Belongs to the SsgA family. In terms of assembly, interacts with SsgA. Interacts with FtsZ (via N-terminus).

It localises to the cell septum. In terms of biological role, involved in sporulation-specific cell division. Required for early stages of sporulation. Important in the process of growth cessation prior to sporulation-specific cell division. Recruits cell division protein FtsZ to the future septum sites and tethers the contractile ring structure (Z ring) to the cytoplasmic membrane during sporulation. Stimulates polymerization and filament length of FtsZ in vitro. The protein is Sporulation-specific cell division protein SsgB of Kineococcus radiotolerans (strain ATCC BAA-149 / DSM 14245 / SRS30216).